Here is a 403-residue protein sequence, read N- to C-terminus: ATP phosphoribosyltransferase regulatory subunit (403 aa).

It belongs to the class-II aminoacyl-tRNA synthetase family. HisZ subfamily. In terms of assembly, heteromultimer composed of HisG and HisZ subunits.

It localises to the cytoplasm. The protein operates within amino-acid biosynthesis; L-histidine biosynthesis; L-histidine from 5-phospho-alpha-D-ribose 1-diphosphate: step 1/9. In terms of biological role, required for the first step of histidine biosynthesis. May allow the feedback regulation of ATP phosphoribosyltransferase activity by histidine. This is ATP phosphoribosyltransferase regulatory subunit from Crocosphaera subtropica (strain ATCC 51142 / BH68) (Cyanothece sp. (strain ATCC 51142)).